A 62-amino-acid chain; its full sequence is Large ribosomal subunit protein bL32 (62 aa).

The tract at residues 28–62 is disordered; that stretch reads SIEPTTGEVHRRHHISPDGFYRGRQVIKAKEQDEE.

The protein belongs to the bacterial ribosomal protein bL32 family.

This is Large ribosomal subunit protein bL32 from Thioalkalivibrio sulfidiphilus (strain HL-EbGR7).